The sequence spans 348 residues: Dihydroorotase (348 aa).

Residues His-14 and His-16 each coordinate Zn(2+). Substrate contacts are provided by residues 16–18 and Asn-42; that span reads HLR. Zn(2+) is bound by residues Lys-100, His-137, and His-175. Lys-100 is modified (N6-carboxylysine). His-137 is a binding site for substrate. Residue Leu-220 participates in substrate binding. Residue Asp-248 participates in Zn(2+) binding. Asp-248 is an active-site residue. The substrate site is built by His-252 and Ala-264.

This sequence belongs to the metallo-dependent hydrolases superfamily. DHOase family. Class II DHOase subfamily. Homodimer. Requires Zn(2+) as cofactor.

The catalysed reaction is (S)-dihydroorotate + H2O = N-carbamoyl-L-aspartate + H(+). The protein operates within pyrimidine metabolism; UMP biosynthesis via de novo pathway; (S)-dihydroorotate from bicarbonate: step 3/3. Its function is as follows. Catalyzes the reversible cyclization of carbamoyl aspartate to dihydroorotate. The chain is Dihydroorotase from Pseudomonas aeruginosa (strain LESB58).